The sequence spans 302 residues: Ubiquitin thioesterase OTU1 (302 aa).

The tract at residues 5 to 83 (RCKARSGTQP…IVEEDTSKPS (79 aa)) is UBX-like. The 126-residue stretch at 103-228 (LARRVVPADN…GIHYDPLERK (126 aa)) folds into the OTU domain. Positions 108–114 (VPADNSC) are cys-loop. Asp111 is an active-site residue. Residue Cys114 is the Nucleophile of the active site. The tract at residues 167-177 (IRREETWGGAI) is variable-loop. Residues 217 to 221 (YDGIH) are his-loop. A substrate-binding site is contributed by Ile220. His221 is a catalytic residue. Residues 245-250 (DVVLAQ) form an S2 site region. Residues 272–296 (LRCMVCQKGLTGQVEAREHAKETGH) form a C2H2-type zinc finger. The active site involves His296.

The protein resides in the cytoplasm. The catalysed reaction is Thiol-dependent hydrolysis of ester, thioester, amide, peptide and isopeptide bonds formed by the C-terminal Gly of ubiquitin (a 76-residue protein attached to proteins as an intracellular targeting signal).. Hydrolase that can remove conjugated ubiquitin from proteins and participates in endoplasmic reticulum-associated degradation (ERAD) for misfolded lumenal proteins. May act by triming the ubiquitin chain on the associated substrate to facilitate their threading through the VCP/p97 pore. Ubiquitin moieties on substrates may present a steric impediment to the threading process when the substrate is transferred to the VCP pore and threaded through VCP's axial channel. Mediates deubiquitination of 'Lys-27'-, 'Lys-29'- and 'Lys-33'-linked polyubiquitin chains. Also able to hydrolyze 'Lys-11'-linked ubiquitin chains. Cleaves both polyubiquitin and di-ubiquitin. The polypeptide is Ubiquitin thioesterase OTU1 (YOD1) (Gallus gallus (Chicken)).